The following is a 93-amino-acid chain: MLQVNEYFSGNVKSIGFDLADQRATVGVMAPGEYEFGTGAPELMVVIRGALTVQLPGATEWQTFSAGQEFNVPGNSKFQLKVATDTAYLCEYK.

Belongs to the nucleoside phosphorylase PpnP family.

The catalysed reaction is a purine D-ribonucleoside + phosphate = a purine nucleobase + alpha-D-ribose 1-phosphate. It carries out the reaction adenosine + phosphate = alpha-D-ribose 1-phosphate + adenine. The enzyme catalyses cytidine + phosphate = cytosine + alpha-D-ribose 1-phosphate. It catalyses the reaction guanosine + phosphate = alpha-D-ribose 1-phosphate + guanine. The catalysed reaction is inosine + phosphate = alpha-D-ribose 1-phosphate + hypoxanthine. It carries out the reaction thymidine + phosphate = 2-deoxy-alpha-D-ribose 1-phosphate + thymine. The enzyme catalyses uridine + phosphate = alpha-D-ribose 1-phosphate + uracil. It catalyses the reaction xanthosine + phosphate = alpha-D-ribose 1-phosphate + xanthine. Functionally, catalyzes the phosphorolysis of diverse nucleosides, yielding D-ribose 1-phosphate and the respective free bases. Can use uridine, adenosine, guanosine, cytidine, thymidine, inosine and xanthosine as substrates. Also catalyzes the reverse reactions. The protein is Pyrimidine/purine nucleoside phosphorylase of Tolumonas auensis (strain DSM 9187 / NBRC 110442 / TA 4).